Consider the following 381-residue polypeptide: MYIHYLKDLIGFKSVTPENDGAIEYIDDLLKQHGFKTEIKIFGDFKSEQVTNLYAIFGRNEPNICFVGHVDVVPVDNHALWHNSSPFKASKQDGKIYGRGAVDMKGAIACFLAASLDFIKNNAGFKGSISFLLTSDEEGKAKHGTKEMLQYIYDQGYKVDFAIVGEPTCEKEIGDTIKIGRRGSVNFKLNIDGLAGHVAYPHKANNPLPCLIKILHELTNIRLDEGTEFFQNSNLEVTNIDVGNETSNVIPASTEASFNIRFNNLHSAETLAKQVEEIIKRYCKEYKVDYKLEYSSFAGSFIQNPSAKIKEFAKVVEHTLKIKPKFSTSGGTSDARFVKNYCPLVEFGLLSETAHKINEYTKISDLQKLYDVYYNFLIKIL.

Histidine 69 contributes to the Zn(2+) binding site. Aspartate 71 is an active-site residue. Residue aspartate 103 participates in Zn(2+) binding. Glutamate 137 serves as the catalytic Proton acceptor. Zn(2+) is bound by residues glutamate 138, glutamate 166, and histidine 355.

Belongs to the peptidase M20A family. DapE subfamily. Homodimer. Requires Zn(2+) as cofactor. Co(2+) is required as a cofactor.

It catalyses the reaction N-succinyl-(2S,6S)-2,6-diaminopimelate + H2O = (2S,6S)-2,6-diaminopimelate + succinate. It functions in the pathway amino-acid biosynthesis; L-lysine biosynthesis via DAP pathway; LL-2,6-diaminopimelate from (S)-tetrahydrodipicolinate (succinylase route): step 3/3. Its function is as follows. Catalyzes the hydrolysis of N-succinyl-L,L-diaminopimelic acid (SDAP), forming succinate and LL-2,6-diaminopimelate (DAP), an intermediate involved in the bacterial biosynthesis of lysine and meso-diaminopimelic acid, an essential component of bacterial cell walls. The polypeptide is Succinyl-diaminopimelate desuccinylase (Rickettsia akari (strain Hartford)).